Consider the following 314-residue polypeptide: Ribosomal RNA small subunit methyltransferase H (314 aa).

Residues Gly-37–His-39, Asp-56, Phe-86, Asp-108, and His-115 contribute to the S-adenosyl-L-methionine site.

The protein belongs to the methyltransferase superfamily. RsmH family.

The protein localises to the cytoplasm. The catalysed reaction is cytidine(1402) in 16S rRNA + S-adenosyl-L-methionine = N(4)-methylcytidine(1402) in 16S rRNA + S-adenosyl-L-homocysteine + H(+). Specifically methylates the N4 position of cytidine in position 1402 (C1402) of 16S rRNA. The chain is Ribosomal RNA small subunit methyltransferase H from Leptospira biflexa serovar Patoc (strain Patoc 1 / ATCC 23582 / Paris).